Consider the following 374-residue polypeptide: Deoxyguanosinetriphosphate triphosphohydrolase-like protein (374 aa).

The HD domain occupies 65 to 196 (RLTHSLEVAQ…ANLADEIAYN (132 aa)).

The protein belongs to the dGTPase family. Type 2 subfamily.

This chain is Deoxyguanosinetriphosphate triphosphohydrolase-like protein (dgt), found in Nitrosomonas europaea (strain ATCC 19718 / CIP 103999 / KCTC 2705 / NBRC 14298).